Consider the following 366-residue polypeptide: Flagellar P-ring protein (366 aa).

Positions 1–20 (MVIKFLSALILLLVTTAAQA) are cleaved as a signal peptide.

Belongs to the FlgI family. As to quaternary structure, the basal body constitutes a major portion of the flagellar organelle and consists of four rings (L,P,S, and M) mounted on a central rod.

Its subcellular location is the periplasm. The protein localises to the bacterial flagellum basal body. Functionally, assembles around the rod to form the L-ring and probably protects the motor/basal body from shearing forces during rotation. This Escherichia coli (strain UTI89 / UPEC) protein is Flagellar P-ring protein.